The primary structure comprises 557 residues: NAD(P)H-quinone oxidoreductase chain 4 (557 aa).

Transmembrane regions (helical) follow at residues 25–45, 57–77, 111–131, 133–153, 157–177, 189–209, 230–250, 264–284, 298–318, 327–347, 353–373, 397–417, 438–458, and 485–505; these read FPWL…VPFI, YALF…LKGF, LILL…PVSF, PKLF…VFAV, LLFF…LAIW, FIIY…AMGF, GFQL…LPIV, TAPV…YALL, FAPL…LTSF, IAYS…SFST, AMLQ…LVGA, FALW…SGFV, IVIA…LLSM, and IYII…PRIM.

The protein belongs to the complex I subunit 4 family.

The protein resides in the cellular thylakoid membrane. It catalyses the reaction a plastoquinone + NADH + (n+1) H(+)(in) = a plastoquinol + NAD(+) + n H(+)(out). It carries out the reaction a plastoquinone + NADPH + (n+1) H(+)(in) = a plastoquinol + NADP(+) + n H(+)(out). Its function is as follows. NDH-1 shuttles electrons from NAD(P)H, via FMN and iron-sulfur (Fe-S) centers, to quinones in the respiratory chain. The immediate electron acceptor for the enzyme in this species is believed to be plastoquinone. Couples the redox reaction to proton translocation (for every two electrons transferred, four hydrogen ions are translocated across the cytoplasmic membrane), and thus conserves the redox energy in a proton gradient. This chain is NAD(P)H-quinone oxidoreductase chain 4, found in Prochlorococcus marinus (strain SARG / CCMP1375 / SS120).